The chain runs to 158 residues: Protein Smg homolog (158 aa).

This sequence belongs to the Smg family.

The chain is Protein Smg homolog from Alteromonas mediterranea (strain DSM 17117 / CIP 110805 / LMG 28347 / Deep ecotype).